The following is a 355-amino-acid chain: Uroporphyrinogen decarboxylase (355 aa).

Substrate is bound by residues 27-31, D78, Y155, S210, and H328; that span reads RQAGR.

Belongs to the uroporphyrinogen decarboxylase family. Homodimer.

It localises to the cytoplasm. It carries out the reaction uroporphyrinogen III + 4 H(+) = coproporphyrinogen III + 4 CO2. It functions in the pathway porphyrin-containing compound metabolism; protoporphyrin-IX biosynthesis; coproporphyrinogen-III from 5-aminolevulinate: step 4/4. Functionally, catalyzes the decarboxylation of four acetate groups of uroporphyrinogen-III to yield coproporphyrinogen-III. The polypeptide is Uroporphyrinogen decarboxylase (Pseudomonas paraeruginosa (strain DSM 24068 / PA7) (Pseudomonas aeruginosa (strain PA7))).